Consider the following 108-residue polypeptide: UPF0060 membrane protein RHOS4_03690 (108 aa).

The next 4 membrane-spanning stretches (helical) occupy residues 5 to 25 (LAAY…VWAW), 32 to 52 (ALWL…LALT), 62 to 82 (AVYG…VEGV), and 86 to 106 (RWDM…LWAP).

This sequence belongs to the UPF0060 family.

The protein resides in the cell inner membrane. In Cereibacter sphaeroides (strain ATCC 17023 / DSM 158 / JCM 6121 / CCUG 31486 / LMG 2827 / NBRC 12203 / NCIMB 8253 / ATH 2.4.1.) (Rhodobacter sphaeroides), this protein is UPF0060 membrane protein RHOS4_03690.